Reading from the N-terminus, the 190-residue chain is Putative manganese efflux pump MntP (190 aa).

The next 6 membrane-spanning stretches (helical) occupy residues 6–26 (IWLLAISLAMDCFTVSITSGI), 36–56 (FFIMAFFFGLFQAVMPLIGWF), 61–81 (FSHLIEDYDHWIAFGLLAFWG), 108–128 (LAIATSIDALAIGISFAFVGI), 138–158 (IVIIGFTSFVISTLGSLIGVF), and 169–189 (LWGGLVLIIIGVKILIEHLFL).

Belongs to the MntP (TC 9.B.29) family.

It localises to the cell inner membrane. Its function is as follows. Probably functions as a manganese efflux pump. The sequence is that of Putative manganese efflux pump MntP from Phocaeicola vulgatus (strain ATCC 8482 / DSM 1447 / JCM 5826 / CCUG 4940 / NBRC 14291 / NCTC 11154) (Bacteroides vulgatus).